A 742-amino-acid chain; its full sequence is Zinc transporter ZIP6 (742 aa).

Over 1-353 (MMTFLCTRSG…QRNTPVYIAW (353 aa)) the chain is Extracellular. N-linked (GlcNAc...) asparagine glycosylation is found at N94 and N127. Disordered stretches follow at residues 148-182 (PVTTKKGDMDHSVEKSDPVPKAQPDPASGKKSQSD) and 191-210 (MNQESTTALTTPSYVTRSRR). A compositionally biased stretch (basic and acidic residues) spans 152–165 (KKGDMDHSVEKSDP). The span at 192-206 (NQESTTALTTPSYVT) shows a compositional bias: polar residues. 3 N-linked (GlcNAc...) asparagine glycosylation sites follow: N212, N232, and N237. The tract at residues 220–260 (TQDHASFSPSQPNVTHSNHTHHDEDTPTHQHDDHDEHEHAR) is disordered. A compositionally biased stretch (polar residues) spans 222–236 (DHASFSPSQPNVTHS). The span at 239–260 (THHDEDTPTHQHDDHDEHEHAR) shows a compositional bias: basic and acidic residues. N-linked (GlcNAc...) asparagine glycans are attached at residues N267 and N337. A disordered region spans residues 310 to 342 (EDEHSDHSHHHKHHHHHHDHQHLQHPHNHTNGR). Positions 316–339 (HSHHHKHHHHHHDHQHLQHPHNHT) are enriched in basic residues. Residues 354–374 (LGGFLSITLISLLALVGVVLI) form a helical membrane-spanning segment. Residues 375 to 385 (PLMNRVCFNFL) lie on the Cytoplasmic side of the membrane. A helical transmembrane segment spans residues 386 to 406 (LSFLVALAVGTLSGDALLHLI). Over 407–430 (PHSQGHHHHGHSEEHAEEEDSLRP) the chain is Extracellular. Residues 431–451 (VWTGLTALSGVYIMFLIEHFL) form a helical membrane-spanning segment. Over 452-644 (TLGKMYKDKN…LKAGMSVRQA (193 aa)) the chain is Cytoplasmic. A helical membrane pass occupies residues 645-665 (MLYNLLSALMGYLGMIIGILI). Topologically, residues 666–671 (GHYAEN) are extracellular. Residues 672–692 (VATWIFALTAGLFMYVALVDM) traverse the membrane as a helical segment. At 693 to 710 (VPEMLHNDASEAGFSHYG) the chain is on the cytoplasmic side. A helical transmembrane segment spans residues 711–731 (FFLLQNAGILLGFGIMLIIAV). The Extracellular portion of the chain corresponds to 732 to 742 (FEDRIQLDLGY).

It belongs to the ZIP transporter (TC 2.A.5) family. In terms of processing, cleaved on the N-terminus before locating to the plasma membrane. N-glycosylated.

The protein localises to the cell membrane. It carries out the reaction Zn(2+)(in) = Zn(2+)(out). Its function is as follows. Acts as a zinc-influx transporter which plays a role in zinc homeostasis and in the induction of epithelial-to-mesenchymal transition (EMT). The protein is Zinc transporter ZIP6 of Danio rerio (Zebrafish).